Reading from the N-terminus, the 519-residue chain is uncharacterized protein (519 aa).

A run of 4 helical transmembrane segments spans residues 141–161 (GSSL…ANVF), 202–222 (LGET…WALA), 385–405 (FVVR…PFVG), and 433–453 (TVVP…AELV).

The protein localises to the cell membrane. This is an uncharacterized protein from Sinorhizobium fredii (strain NBRC 101917 / NGR234).